The sequence spans 126 residues: uncharacterized protein (126 aa).

This is an uncharacterized protein from Bacillus subtilis (strain 168).